Reading from the N-terminus, the 993-residue chain is Vacuolar membrane protease (993 aa).

The Cytoplasmic segment spans residues 1–24; sequence MSPAMANPRVRKFNPIAFTPLPVT. The chain crosses the membrane as a helical span at residues 25 to 45; that stretch reads LITTIVYLAVLILVLVTYLVV. The Vacuolar portion of the chain corresponds to 46–391; the sequence is PPAPTLEMSP…SAFAVFRLHT (346 aa). N-linked (GlcNAc...) asparagine glycosylation is found at Asn-59, Asn-116, and Asn-119. The Zn(2+) site is built by His-175 and Asp-187. Glu-221 acts as the Proton acceptor in catalysis. Zn(2+) is bound at residue Glu-222. A glycan (N-linked (GlcNAc...) asparagine) is linked at Asn-238. Zn(2+)-binding residues include Glu-247 and His-320. Residues 392–412 form a helical membrane-spanning segment; that stretch reads LFALSVTLLVSAPLVLFITSI. The Cytoplasmic segment spans residues 413–447; that stretch reads ALSKTDRMYLFSMSKSLGGTSETVSLRGLRGLFRT. A helical transmembrane segment spans residues 448–468; the sequence is PIILTVTTVITIGLAYLLEKI. The Vacuolar portion of the chain corresponds to 469-475; sequence NPYIVHS. A helical transmembrane segment spans residues 476-496; the sequence is SQFAVWSMMLSVWIFVAWFLA. Residues 497–509 are Cytoplasmic-facing; the sequence is RVADFFRPSALHR. The chain crosses the membrane as a helical span at residues 510–530; sequence AYSYTWIFIATWIMLVISTVY. The Vacuolar portion of the chain corresponds to 531-534; that stretch reads ANQK. Residues 535–555 form a helical membrane-spanning segment; that stretch reads GIAAGYFIFFYFAAVFLATWV. Residues 556-672 are Cytoplasmic-facing; sequence SYLELFSLPR…WSWTLPRWTW (117 aa). Residues 579 to 621 form a disordered region; it reads RRSSSLSSRLLTPSADELPSDIGPNGAENLGDPDETDPTESTS. A helical membrane pass occupies residues 673–693; it reads ILQLLLLAPIVIILVGQVGLL. At 694–709 the chain is on the vacuolar side; sequence LTTAMSQIGSDGVSTF. The chain crosses the membrane as a helical span at residues 710-730; that stretch reads IVYLACALLSTLLFAPLFPFI. Topologically, residues 731–737 are cytoplasmic; sequence HRFTYHV. A helical membrane pass occupies residues 738–758; that stretch reads PTFLLLIFIGTLIYNLVAFPF. The Vacuolar portion of the chain corresponds to 759 to 993; that stretch reads SPANRLKIFF…VEASHDFIIQ (235 aa). N-linked (GlcNAc...) asparagine glycosylation is found at Asn-806, Asn-847, and Asn-955.

It belongs to the peptidase M28 family. It depends on Zn(2+) as a cofactor.

The protein resides in the vacuole membrane. Its function is as follows. May be involved in vacuolar sorting and osmoregulation. In Paracoccidioides lutzii (strain ATCC MYA-826 / Pb01) (Paracoccidioides brasiliensis), this protein is Vacuolar membrane protease.